Consider the following 95-residue polypeptide: Alpha-conotoxin VxXXB (95 aa).

The first 24 residues, 1-24 (MPKLAVVLLVLLILPLSYFDAAGG), serve as a signal peptide directing secretion. Positions 25–45 (QAVQGDWRGNRLARDLQRGGR) are excised as a propeptide. A 4-carboxyglutamate mark is found at E48 and E50. P59 carries the 4-hydroxyproline; partial modification. Cystine bridges form between C64/C73, C69/C81, C74/C91, and C79/C93. P75 bears the 4-hydroxyproline; partial mark. P94 carries the 4-hydroxyproline; partial modification. At P94 the chain carries Proline amide; in form [desGly-95]VxXXB.

The protein belongs to the conotoxin D superfamily. Homodimer. Pseudo-homodimer (identical sequence, different post-translational modifications). As to expression, expressed by the venom duct.

It is found in the secreted. Functionally, alpha-conotoxins act on postsynaptic membranes, they bind to the nicotinic acetylcholine receptors (nAChR) and thus inhibit them. Through its two C-terminal domains, this homodimeric protein would bind to two nAChR allosteric sites, located outside the nAChR C-loop of the principal binding face and at the adjacent binding interface in a clockwise direction. It specifically blocks mammalian neuronal nAChR of the alpha-7/CHRNA7 (IC(50)=0.4 nM), alpha-3-beta-2/CHRNA3-CHRNB2 (IC(50)=8.4 nM) and alpha-4-beta-2/CHRNA4-CHRNB2 (IC(50)=228 nM) subtypes. It inhibits alpha-7/CHRNA7, alpha-3-beta-2/CHRNA3-CHRNB2 and alpha-4-beta-2/CHRNA4-CHRNB2 nAChR subtypes more efficiently than VxXXA and VxXXC. The chain is Alpha-conotoxin VxXXB from Conus vexillum (Flag cone).